We begin with the raw amino-acid sequence, 461 residues long: ATP synthase subunit beta 2 (461 aa).

ATP is bound at residue 151–158 (GGAGVGKT).

This sequence belongs to the ATPase alpha/beta chains family. F-type ATPases have 2 components, CF(1) - the catalytic core - and CF(0) - the membrane proton channel. CF(1) has five subunits: alpha(3), beta(3), gamma(1), delta(1), epsilon(1). CF(0) has three main subunits: a(1), b(2) and c(9-12). The alpha and beta chains form an alternating ring which encloses part of the gamma chain. CF(1) is attached to CF(0) by a central stalk formed by the gamma and epsilon chains, while a peripheral stalk is formed by the delta and b chains.

It localises to the cell inner membrane. It catalyses the reaction ATP + H2O + 4 H(+)(in) = ADP + phosphate + 5 H(+)(out). Functionally, produces ATP from ADP in the presence of a proton gradient across the membrane. The catalytic sites are hosted primarily by the beta subunits. The sequence is that of ATP synthase subunit beta 2 from Photobacterium profundum (strain SS9).